Here is a 436-residue protein sequence, read N- to C-terminus: Platelet-activating factor acetylhydrolase (436 aa).

An N-terminal signal peptide occupies residues 1 to 21 (MAPPKLHTLFCLSGFLALVHP). 2 N-linked (GlcNAc...) asparagine glycosylation sites follow: asparagine 76 and asparagine 200. The active-site Nucleophile is the serine 271. Aspartate 294 serves as the catalytic Charge relay system. Asparagine 324 carries N-linked (GlcNAc...) asparagine glycosylation. Histidine 349 acts as the Charge relay system in catalysis.

This sequence belongs to the AB hydrolase superfamily. Lipase family. In terms of processing, N-glycosylated. As to expression, plasma.

The protein resides in the secreted. Its subcellular location is the extracellular space. The enzyme catalyses a 1-O-alkyl-2-acetyl-sn-glycero-3-phosphocholine + H2O = a 1-O-alkyl-sn-glycero-3-phosphocholine + acetate + H(+). It catalyses the reaction 1-O-decyl-2-acetyl-sn-glycero-3-phosphocholine + H2O = 1-O-decyl-sn-glycero-3-phosphocholine + acetate + H(+). It carries out the reaction 1-O-dodecyl-2-acetyl-sn-glycero-3-phosphocholine + H2O = 1-O-dodecyl-sn-glycero-3-phosphocholine + acetate + H(+). The catalysed reaction is 1-O-tetradecyl-2-acetyl-sn-glycero-3-phosphocholine + H2O = 1-O-tetradecyl-sn-glycero-3-phosphocholine + acetate + H(+). The enzyme catalyses 1-O-hexadecyl-2-acetyl-sn-glycero-3-phosphocholine + H2O = 1-O-hexadecyl-sn-glycero-3-phosphocholine + acetate + H(+). It catalyses the reaction 1-O-octadecyl-2-acetyl-sn-glycero-3-phosphocholine + H2O = 1-O-octadecyl-sn-glycero-3-phosphocholine + acetate + H(+). It carries out the reaction 1-hexadecanoyl-2-acetyl-sn-glycero-3-phosphocholine + H2O = 1-hexadecanoyl-sn-glycero-3-phosphocholine + acetate + H(+). The catalysed reaction is 1-hexadecanoyl-2-propionyl-sn-glycero-3-phosphocholine + H2O = propanoate + 1-hexadecanoyl-sn-glycero-3-phosphocholine + H(+). The enzyme catalyses 1-hexadecanoyl-2-butanoyl-sn-glycero-3-phosphocholine + H2O = butanoate + 1-hexadecanoyl-sn-glycero-3-phosphocholine + H(+). It catalyses the reaction 1-hexadecanoyl-2-pentanoyl-sn-glycero-3-phosphocholine + H2O = pentanoate + 1-hexadecanoyl-sn-glycero-3-phosphocholine + H(+). It carries out the reaction 1-hexadecanoyl-2-glutaroyl-sn-glycero-3-phosphocholine + H2O = glutarate + 1-hexadecanoyl-sn-glycero-3-phosphocholine + H(+). The catalysed reaction is 1-hexadecanoyl-2-(5-oxopentanoyl)-sn-glycero-3-phosphocholine + H2O = 5-oxopentanoate + 1-hexadecanoyl-sn-glycero-3-phosphocholine + H(+). The enzyme catalyses 1-hexadecanoyl-2-(9-oxononanoyl)-sn-glycero-3-phosphocholine + H2O = 9-oxononanoate + 1-hexadecanoyl-sn-glycero-3-phosphocholine + H(+). It catalyses the reaction 1-hexadecanoyl-2-[9-hydroperoxy-(10E-octadecenoyl)]-sn-glycero-3-phosphocholine + H2O = 9-hydroperoxy-10E-octadecenoate + 1-hexadecanoyl-sn-glycero-3-phosphocholine + H(+). It carries out the reaction 1-hexadecanoyl-2-(10-hydroperoxy-8E-octadecenoyl)-sn-glycero-3-phosphocholine + H2O = 10-hydroperoxy-(8E)-octadecenoate + 1-hexadecanoyl-sn-glycero-3-phosphocholine + H(+). Lipoprotein-associated calcium-independent phospholipase A2 involved in phospholipid catabolism during inflammatory and oxidative stress response. At the lipid-aqueous interface, hydrolyzes the ester bond of fatty acyl group attached at sn-2 position of phospholipids (phospholipase A2 activity). Specifically targets phospholipids with a short-chain fatty acyl group at sn-2 position. Can hydrolyze phospholipids with long fatty acyl chains, only if they carry oxidized functional groups. Hydrolyzes and inactivates platelet-activating factor (PAF, 1-O-alkyl-2-acetyl-sn-glycero-3-phosphocholine), a potent pro-inflammatory signaling lipid that acts through PTAFR on various innate immune cells. Hydrolyzes oxidatively truncated phospholipids carrying an aldehyde group at omega position, preventing their accumulation in lipoprotein particles and uncontrolled pro-inflammatory effects. As part of high-density lipoprotein (HDL) particles, can hydrolyze phospholipids having long-chain fatty acyl hydroperoxides at sn-2 position and protect against potential accumulation of these oxylipins in the vascular wall. Catalyzes the release from membrane phospholipids of F2-isoprostanes, lipid biomarkers of cellular oxidative damage. This is Platelet-activating factor acetylhydrolase (PLA2G7) from Cavia porcellus (Guinea pig).